The sequence spans 308 residues: MAATKLHPALRNAIRAGANLPTEVISATFDVQEGIKLLSAFLLRHEPVCVLTGAGISTDSGIPDYRSPGRPPHRPLQHLEFLGSHERQQRYWARSLYGYPRIRDTMPNVGHQAINELQRRGLVGAIITQNVDGLHQRAGSQHVIDLHGRLDQVKCMNCHSITTRDELQSRLLADNKALLDQFSVVHDEAVRPDGDAVLDEDLYGRFTVAACASCGGVLKPNVVFFGGSLDPEDVKRASTAVSEASALFVVGTSLATWSAFRIVRQAVEEAKPVCVLNSGPTRADGVIPEYLRLCMPIGEVLPAALRQL.

The transit peptide at 1-16 (MAATKLHPALRNAIRA) directs the protein to the mitochondrion. Residues 28 to 308 (TFDVQEGIKL…EVLPAALRQL (281 aa)) form the Deacetylase sirtuin-type domain. NAD(+) is bound by residues 53–73 (GAGI…RPPH) and 129–132 (QNVD). His147 functions as the Proton acceptor in the catalytic mechanism. 4 residues coordinate Zn(2+): Cys155, Cys158, Cys211, and Cys214. Residues 251 to 253 (GTS), 277 to 279 (NSG), and Ile297 each bind NAD(+).

This sequence belongs to the sirtuin family. Class II subfamily. It depends on Zn(2+) as a cofactor.

The protein resides in the mitochondrion matrix. The catalysed reaction is N(6)-acetyl-L-lysyl-[protein] + NAD(+) + H2O = 2''-O-acetyl-ADP-D-ribose + nicotinamide + L-lysyl-[protein]. Its function is as follows. NAD-dependent protein deacylase. Catalyzes the NAD-dependent hydrolysis of acyl groups from lysine residues. The polypeptide is NAD-dependent protein deacylase SIR4 (Monosiga brevicollis (Choanoflagellate)).